A 723-amino-acid polypeptide reads, in one-letter code: Threonine--tRNA ligase, mitochondrial (723 aa).

S57 carries the post-translational modification Phosphoserine. The region spanning R64 to T126 is the TGS domain.

It belongs to the class-II aminoacyl-tRNA synthetase family. Homodimer.

The protein localises to the mitochondrion matrix. It catalyses the reaction tRNA(Thr) + L-threonine + ATP = L-threonyl-tRNA(Thr) + AMP + diphosphate + H(+). Functionally, catalyzes the attachment of threonine to tRNA(Thr) in a two-step reaction: threonine is first activated by ATP to form Thr-AMP and then transferred to the acceptor end of tRNA(Thr). Also edits incorrectly charged tRNA(Thr) via its editing domain. The polypeptide is Threonine--tRNA ligase, mitochondrial (Tars2) (Mus musculus (Mouse)).